The primary structure comprises 38 residues: Photosystem II reaction center protein L (38 aa).

The chain crosses the membrane as a helical span at residues 17-37; that stretch reads SLYWGLLLIFVLAVLFSSYIF.

This sequence belongs to the PsbL family. PSII is composed of 1 copy each of membrane proteins PsbA, PsbB, PsbC, PsbD, PsbE, PsbF, PsbH, PsbI, PsbJ, PsbK, PsbL, PsbM, PsbT, PsbX, PsbY, PsbZ, Psb30/Ycf12, at least 3 peripheral proteins of the oxygen-evolving complex and a large number of cofactors. It forms dimeric complexes.

The protein resides in the plastid. It localises to the chloroplast thylakoid membrane. In terms of biological role, one of the components of the core complex of photosystem II (PSII). PSII is a light-driven water:plastoquinone oxidoreductase that uses light energy to abstract electrons from H(2)O, generating O(2) and a proton gradient subsequently used for ATP formation. It consists of a core antenna complex that captures photons, and an electron transfer chain that converts photonic excitation into a charge separation. This subunit is found at the monomer-monomer interface and is required for correct PSII assembly and/or dimerization. This is Photosystem II reaction center protein L from Ostreococcus tauri.